Here is a 556-residue protein sequence, read N- to C-terminus: Sphingomyelinase C (556 aa).

The N-terminal stretch at 1 to 27 (MRIKKYTKVRLLVNCCLLLFFLIDCGA) is a signal peptide.

It is found in the secreted. The catalysed reaction is a sphingomyelin + H2O = phosphocholine + an N-acylsphing-4-enine + H(+). The protein is Sphingomyelinase C (sph) of Leptospira interrogans.